An 842-amino-acid chain; its full sequence is Leucine--tRNA ligase (842 aa).

The 'HIGH' region signature appears at 44 to 55; that stretch reads PYPSANGLHVGH. The 'KMSKS' region motif lies at 619–623; that stretch reads KMSKS. Lys622 is a binding site for ATP.

The protein belongs to the class-I aminoacyl-tRNA synthetase family.

Its subcellular location is the cytoplasm. The catalysed reaction is tRNA(Leu) + L-leucine + ATP = L-leucyl-tRNA(Leu) + AMP + diphosphate. In Borrelia turicatae (strain 91E135), this protein is Leucine--tRNA ligase.